Reading from the N-terminus, the 334-residue chain is Phosphate acyltransferase (334 aa).

It belongs to the PlsX family. Homodimer. Probably interacts with PlsY.

It is found in the cytoplasm. It carries out the reaction a fatty acyl-[ACP] + phosphate = an acyl phosphate + holo-[ACP]. Its pathway is lipid metabolism; phospholipid metabolism. Functionally, catalyzes the reversible formation of acyl-phosphate (acyl-PO(4)) from acyl-[acyl-carrier-protein] (acyl-ACP). This enzyme utilizes acyl-ACP as fatty acyl donor, but not acyl-CoA. The polypeptide is Phosphate acyltransferase (Caldicellulosiruptor saccharolyticus (strain ATCC 43494 / DSM 8903 / Tp8T 6331)).